We begin with the raw amino-acid sequence, 205 residues long: High frequency lysogenization protein HflD homolog (205 aa).

This sequence belongs to the HflD family.

The protein resides in the cytoplasm. Its subcellular location is the cell inner membrane. This chain is High frequency lysogenization protein HflD homolog, found in Photobacterium profundum (strain SS9).